Consider the following 154-residue polypeptide: Myoglobin (154 aa).

The region spanning 2–148 (GLSDGEWQLV…FRNDIAAKYK (147 aa)) is the Globin domain. S4 bears the Phosphoserine mark. H65 provides a ligand contact to nitrite. H65 contributes to the O2 binding site. T68 is modified (phosphothreonine). H94 lines the heme b pocket.

It belongs to the globin family. In terms of assembly, monomeric.

The protein localises to the cytoplasm. It is found in the sarcoplasm. The catalysed reaction is Fe(III)-heme b-[protein] + nitric oxide + H2O = Fe(II)-heme b-[protein] + nitrite + 2 H(+). The enzyme catalyses H2O2 + AH2 = A + 2 H2O. Its function is as follows. Monomeric heme protein which primary function is to store oxygen and facilitate its diffusion within muscle tissues. Reversibly binds oxygen through a pentacoordinated heme iron and enables its timely and efficient release as needed during periods of heightened demand. Depending on the oxidative conditions of tissues and cells, and in addition to its ability to bind oxygen, it also has a nitrite reductase activity whereby it regulates the production of bioactive nitric oxide. Under stress conditions, like hypoxia and anoxia, it also protects cells against reactive oxygen species thanks to its pseudoperoxidase activity. The chain is Myoglobin (MB) from Sciurus vulgaris (Eurasian red squirrel).